A 206-amino-acid polypeptide reads, in one-letter code: Uridine kinase (206 aa).

Residue 11–18 participates in ATP binding; sequence GGSASGKT.

This sequence belongs to the uridine kinase family.

The protein localises to the cytoplasm. The catalysed reaction is uridine + ATP = UMP + ADP + H(+). It catalyses the reaction cytidine + ATP = CMP + ADP + H(+). Its pathway is pyrimidine metabolism; CTP biosynthesis via salvage pathway; CTP from cytidine: step 1/3. It participates in pyrimidine metabolism; UMP biosynthesis via salvage pathway; UMP from uridine: step 1/1. This Lactococcus lactis subsp. cremoris (strain MG1363) protein is Uridine kinase.